The primary structure comprises 219 residues: 7-methyl-GTP pyrophosphatase (219 aa).

The active-site Proton acceptor is Asp-89.

The protein belongs to the Maf family. YceF subfamily. It depends on a divalent metal cation as a cofactor.

It localises to the cytoplasm. It catalyses the reaction N(7)-methyl-GTP + H2O = N(7)-methyl-GMP + diphosphate + H(+). Nucleoside triphosphate pyrophosphatase that hydrolyzes 7-methyl-GTP (m(7)GTP). May have a dual role in cell division arrest and in preventing the incorporation of modified nucleotides into cellular nucleic acids. In Polaromonas sp. (strain JS666 / ATCC BAA-500), this protein is 7-methyl-GTP pyrophosphatase.